The following is a 192-amino-acid chain: Pyruvate synthase subunit PorC (192 aa).

In terms of assembly, heterotetramer of one alpha, one beta, one delta and one gamma chain.

It carries out the reaction 2 oxidized [2Fe-2S]-[ferredoxin] + pyruvate + CoA = 2 reduced [2Fe-2S]-[ferredoxin] + acetyl-CoA + CO2 + H(+). The sequence is that of Pyruvate synthase subunit PorC (porC) from Thermotoga maritima (strain ATCC 43589 / DSM 3109 / JCM 10099 / NBRC 100826 / MSB8).